Here is a 420-residue protein sequence, read N- to C-terminus: Probable acetate kinase (420 aa).

Asn10 contacts Mg(2+). Residue Lys17 coordinates ATP. Residue Arg97 participates in substrate binding. Asp153 (proton donor/acceptor) is an active-site residue. 213 to 217 (HIGSG) provides a ligand contact to ATP. Glu403 is a binding site for Mg(2+).

Belongs to the acetokinase family. It depends on Mg(2+) as a cofactor.

It carries out the reaction acetate + ATP = acetyl phosphate + ADP. It functions in the pathway metabolic intermediate biosynthesis; acetyl-CoA biosynthesis; acetyl-CoA from acetate: step 1/2. The sequence is that of Probable acetate kinase from Emericella nidulans (strain FGSC A4 / ATCC 38163 / CBS 112.46 / NRRL 194 / M139) (Aspergillus nidulans).